A 1367-amino-acid chain; its full sequence is Flocculation protein FLO11 (1367 aa).

Residues M1 to G21 form the signal peptide. The region spanning S31–G207 is the Flo11 domain. 3 cysteine pairs are disulfide-bonded: C37/C201, C44/C179, and C141/C205. The segment covering K209–C267 has biased composition (low complexity). 2 disordered regions span residues K209 to V975 and T1008 to P1032. Tandem repeats lie at residues S210–E219, S220–E229, S230–E239, S240–E249, P262–P274, P275–P287, P313–A327, P328–A342, P343–A354, P355–A369, P370–A381, P382–A393, P394–A408, P409–A420, P421–A432, P433–A444, P445–A456, P457–A471, P472–A483, P484–A498, P499–A510, P511–A525, P526–A540, P541–A552, P568–A579, P580–A594, P595–A609, P610–A624, P625–A636, P637–A651, P652–A666, P667–A681, P682–A693, P694–A705, P706–A720, P721–A735, P736–A750, P751–A762, P763–A777, P778–A792, P808–A822, P838–A852, P865–A879, T937–P968, and T981–P1012. The 4 X 10 AA repeats, Ser/Thr-rich stretch occupies residues S210–E249. The tract at residues P262 to P287 is 2 X 13 AA repeats, Thr-rich. Basic and acidic residues predominate over residues T281–T292. Low complexity-rich tracts occupy residues T302–P900 and T910–T948. Residues P313–A852 are 22 X 15 AA approximate repeats, Ser-rich. The tract at residues P343–A762 is 15 X 12 AA repeats, Ser/Thr-rich. N817 is a glycosylation site (N-linked (GlcNAc...) asparagine). An N-linked (GlcNAc...) asparagine glycan is attached at N874. Residues T937–P1119 form a 3 X 32 AA tandem repeats, Thr-rich region. Residues N949–K961 are compositionally biased toward polar residues. Residues T962–V975 are compositionally biased toward low complexity. Over residues S1014 to P1032 the composition is skewed to low complexity. Residues T1088–P1119 form a 5-3 repeat. A lipid anchor (GPI-anchor amidated glycine) is attached at G1346. A propeptide spans A1347 to F1367 (removed in mature form).

Belongs to the flocculin family. Highly divergent. Extensively O-mannosylated. Post-translationally, the GPI-anchor is attached to the protein in the endoplasmic reticulum and serves to target the protein to the cell surface. There, the glucosamine-inositol phospholipid moiety is cleaved off and the GPI-modified mannoprotein is covalently attached via its lipidless GPI glycan remnant to the 1,6-beta-glucan of the outer cell wall layer. In terms of processing, a soluble form is probably produced by proteolytic cleavage at the cell surface (shedding).

Its subcellular location is the secreted. The protein localises to the cell wall. It is found in the membrane. In terms of biological role, homophilic binding protein that enables kin discrimination in heterogeneous yeast populations by mediating homotypic cell-cell interactions during flocculation, a reversible and asexual process in which cells adhere to form aggregates (flocs). Plays a role in cell-substrate adhesion, haploid invasive growth, diploid pseudohyphae formation and biofilm (flor) development. Adhesive activity is inhibited by mannose, but not by glucose, maltose, sucrose or galactose. This is Flocculation protein FLO11 from Saccharomyces cerevisiae (strain ATCC 204508 / S288c) (Baker's yeast).